The chain runs to 280 residues: C-type lectin domain family 1 member A (280 aa).

A disordered region spans residues 1–44 (MQAKYSSTRDMLDDDGDTTMSLHSQGSATTRHPEPRRTEHRAPS). The Cytoplasmic portion of the chain corresponds to 1-52 (MQAKYSSTRDMLDDDGDTTMSLHSQGSATTRHPEPRRTEHRAPSSTWRPVAL). The segment covering 18-30 (TTMSLHSQGSATT) has biased composition (polar residues). Residues 31 to 42 (RHPEPRRTEHRA) are compositionally biased toward basic and acidic residues. Residues 53 to 73 (TLLTLCLVLLIGLAALGLLFF) form a helical; Signal-anchor for type II membrane protein membrane-spanning segment. Over 74–280 (QYYQLSNTGQ…VPPETLGEGD (207 aa)) the chain is Extracellular. N-linked (GlcNAc...) asparagine glycans are attached at residues N95 and N169. The C-type lectin domain maps to 144 to 258 (HGDNCYQFYK…CKELKRCVCE (115 aa)). 2 cysteine pairs are disulfide-bonded: C165-C257 and C236-C249.

In terms of tissue distribution, expressed preferentially in dendritic cells.

The protein localises to the membrane. In Homo sapiens (Human), this protein is C-type lectin domain family 1 member A (CLEC1A).